Here is a 127-residue protein sequence, read N- to C-terminus: Secreted RxLR effector protein 7 (127 aa).

Positions 1-21 (MRSAYYVLTALLVVASSQVAA) are cleaved as a signal peptide. Positions 48-65 (RFLRESRDVHGNVANEER) match the RxLR-dEER motif.

It belongs to the RxLR effector family.

It localises to the secreted. Its subcellular location is the host nucleus. The protein localises to the host cytoplasm. In terms of biological role, secreted effector that completely suppresses the host cell death induced by cell death-inducing proteins. The protein is Secreted RxLR effector protein 7 of Plasmopara viticola (Downy mildew of grapevine).